Consider the following 757-residue polypeptide: uncharacterized protein (757 aa).

In terms of domain architecture, S1 motif spans 640 to 709 (GMILEGVVSN…ARKRIALTMR (70 aa)). Positions 711 to 741 (DDEPGGAKHKMPSENRSRERTAGRKPQRNDR) are enriched in basic and acidic residues. The segment at 711-757 (DDEPGGAKHKMPSENRSRERTAGRKPQRNDRAPANSAMADAFAKLKR) is disordered.

This is an uncharacterized protein from Neisseria meningitidis serogroup B (strain ATCC BAA-335 / MC58).